Reading from the N-terminus, the 319-residue chain is MIQRNINRVALIGAGSVGSSYAFALLNQSITEELVIIDVNEDKAMGDAMDLNHGKIFAPNPTKTWYGNYDDCKEADIVCICAGANQKPGETRLDLVEKNLKIFKSLVDQVMASGFDGIFLIATNPVDILTYATWKFSGLPKERVIGSGTILDSGRFRFLLGEYFDIAPANVHAHIIGEHGDTELPVWSHADIGGVPVEELITRNPEYKMEDLDQLFVNVRDAAYHIIKKKGATYYGIAMGLARITKAILNNENSVLTVSTYLDGEYGEKDVYIGVPAVVNRTGIREILELTLSETEQKQFTHSSTVLKEILNPHFKEAR.

NAD(+)-binding positions include Val17, Asp38, Lys43, Tyr69, and 83-84; that span reads GA. 2 residues coordinate substrate: Gln86 and Arg92. Residues Ser105, 122–124, and Ser147 each bind NAD(+); that span reads ATN. Residue 124 to 127 participates in substrate binding; it reads NPVD. Residue 152–155 participates in substrate binding; sequence DSGR. The beta-D-fructose 1,6-bisphosphate site is built by Arg157 and His172. His179 acts as the Proton acceptor in catalysis. Residue Tyr224 is modified to Phosphotyrosine. Thr233 is a binding site for substrate.

Belongs to the LDH/MDH superfamily. LDH family. In terms of assembly, homotetramer.

It is found in the cytoplasm. The enzyme catalyses (S)-lactate + NAD(+) = pyruvate + NADH + H(+). The protein operates within fermentation; pyruvate fermentation to lactate; (S)-lactate from pyruvate: step 1/1. Allosterically activated by fructose 1,6-bisphosphate (FBP). In terms of biological role, catalyzes the conversion of lactate to pyruvate. The chain is L-lactate dehydrogenase 2 from Peribacillus psychrosaccharolyticus (Bacillus psychrosaccharolyticus).